We begin with the raw amino-acid sequence, 137 residues long: Nucleoside diphosphate kinase (137 aa).

Lys-9, Phe-57, Arg-85, Thr-91, Arg-102, and Asn-112 together coordinate ATP. Residue His-115 is the Pros-phosphohistidine intermediate of the active site.

This sequence belongs to the NDK family. Homotetramer. It depends on Mg(2+) as a cofactor.

It is found in the cytoplasm. It carries out the reaction a 2'-deoxyribonucleoside 5'-diphosphate + ATP = a 2'-deoxyribonucleoside 5'-triphosphate + ADP. The catalysed reaction is a ribonucleoside 5'-diphosphate + ATP = a ribonucleoside 5'-triphosphate + ADP. Its function is as follows. Major role in the synthesis of nucleoside triphosphates other than ATP. The ATP gamma phosphate is transferred to the NDP beta phosphate via a ping-pong mechanism, using a phosphorylated active-site intermediate. The chain is Nucleoside diphosphate kinase from Leptospira biflexa serovar Patoc (strain Patoc 1 / ATCC 23582 / Paris).